We begin with the raw amino-acid sequence, 340 residues long: Nicotinate-nucleotide--dimethylbenzimidazole phosphoribosyltransferase (340 aa).

The active-site Proton acceptor is E305.

The protein belongs to the CobT family.

It catalyses the reaction 5,6-dimethylbenzimidazole + nicotinate beta-D-ribonucleotide = alpha-ribazole 5'-phosphate + nicotinate + H(+). It functions in the pathway nucleoside biosynthesis; alpha-ribazole biosynthesis; alpha-ribazole from 5,6-dimethylbenzimidazole: step 1/2. Its function is as follows. Catalyzes the synthesis of alpha-ribazole-5'-phosphate from nicotinate mononucleotide (NAMN) and 5,6-dimethylbenzimidazole (DMB). The sequence is that of Nicotinate-nucleotide--dimethylbenzimidazole phosphoribosyltransferase from Allorhizobium ampelinum (strain ATCC BAA-846 / DSM 112012 / S4) (Agrobacterium vitis (strain S4)).